The primary structure comprises 130 residues: Phosphomevalonate dehydratase small subunit (130 aa).

Serine 62 serves as the catalytic Proton acceptor.

The protein belongs to the AcnX type II small subunit family. Heterodimer composed of a large subunit (PMDh-L) and a small subunit (PMDh-S).

The enzyme catalyses (R)-5-phosphomevalonate = (2E)-3-methyl-5-phosphooxypent-2-enoate + H2O. It participates in isoprenoid biosynthesis; isopentenyl diphosphate biosynthesis via mevalonate pathway. Component of a hydro-lyase that catalyzes the dehydration of mevalonate 5-phosphate (MVA5P) to form trans-anhydromevalonate 5-phosphate (tAHMP). Involved in the archaeal mevalonate (MVA) pathway, which provides fundamental precursors for isoprenoid biosynthesis, such as isopentenyl diphosphate (IPP) and dimethylallyl diphosphate (DMAPP). In Thermococcus onnurineus (strain NA1), this protein is Phosphomevalonate dehydratase small subunit.